The following is a 235-amino-acid chain: Adenosine 5'-phosphosulfate reductase (235 aa).

Residues cysteine 121, cysteine 122, cysteine 204, and cysteine 207 each contribute to the [4Fe-4S] cluster site. Cysteine 230 functions as the Nucleophile; cysteine thiosulfonate intermediate in the catalytic mechanism.

This sequence belongs to the PAPS reductase family. CysH subfamily. The cofactor is [4Fe-4S] cluster.

It localises to the cytoplasm. It catalyses the reaction [thioredoxin]-disulfide + sulfite + AMP + 2 H(+) = adenosine 5'-phosphosulfate + [thioredoxin]-dithiol. It participates in sulfur metabolism; hydrogen sulfide biosynthesis; sulfite from sulfate. Catalyzes the formation of sulfite from adenosine 5'-phosphosulfate (APS) using thioredoxin as an electron donor. The sequence is that of Adenosine 5'-phosphosulfate reductase from Geobacillus sp. (strain WCH70).